The following is a 741-amino-acid chain: Homeobox protein AHox1 (741 aa).

Disordered stretches follow at residues 1 to 30 (MEKMHSKSVSPVPFNNSNNTSLGGLRKSSS), 61 to 96 (KRRLLDPQNKKKQNRFERYSSSNHAQEQSSEENFCR), 146 to 183 (VNPLSKYFKPSSNDQLGARRTATSFSSSSEASDSKSCC), 203 to 226 (ADSDWSEDATGNEADDPDDHINQD), 357 to 383 (KTEESLRSPSETKQYSPDASTFYPIRT), 476 to 501 (FDFPPKFGSNNSSTDKPEQEDNNPQT), and 616 to 642 (QYGHMSSSQNPHSETQNRSEEVRGTVK). The segment covering 7–19 (KSVSPVPFNNSNN) has biased composition (low complexity). Basic and acidic residues predominate over residues 63 to 78 (RLLDPQNKKKQNRFER). Over residues 79 to 92 (YSSSNHAQEQSSEE) the composition is skewed to polar residues. Residues 169–181 (SFSSSSEASDSKS) show a composition bias toward low complexity. Positions 363-375 (RSPSETKQYSPDA) are enriched in polar residues. A compositionally biased stretch (polar residues) spans 616 to 629 (QYGHMSSSQNPHSE). Residues 630–639 (TQNRSEEVRG) are compositionally biased toward basic and acidic residues. The segment at residues 645–704 (RKWNRAVFSLMQRRGLEKSFQSQKYVAKPERRKLADALSLTDAQVKIWFQNRRMKWRQEI) is a DNA-binding region (homeobox). The segment at 722–741 (EIEKEKTQTPSDEGEVINVD) is disordered.

It belongs to the H2.0 homeobox family. In terms of tissue distribution, expressed in the tissues of endodermal origin.

The protein localises to the nucleus. This is Homeobox protein AHox1 (AHOX1) from Halocynthia roretzi (Sea squirt).